The sequence spans 394 residues: Methionine import ATP-binding protein MetN 2 (394 aa).

The region spanning valine 39–leucine 278 is the ABC transporter domain. ATP is bound at residue glycine 75 to serine 82.

This sequence belongs to the ABC transporter superfamily. Methionine importer (TC 3.A.1.24) family. As to quaternary structure, the complex is composed of two ATP-binding proteins (MetN), two transmembrane proteins (MetI) and a solute-binding protein (MetQ).

The protein resides in the cell inner membrane. It catalyses the reaction L-methionine(out) + ATP + H2O = L-methionine(in) + ADP + phosphate + H(+). It carries out the reaction D-methionine(out) + ATP + H2O = D-methionine(in) + ADP + phosphate + H(+). Part of the ABC transporter complex MetNIQ involved in methionine import. Responsible for energy coupling to the transport system. This Burkholderia cenocepacia (strain HI2424) protein is Methionine import ATP-binding protein MetN 2.